Consider the following 404-residue polypeptide: POU domain, class 2, transcription factor 3L (404 aa).

Disordered stretches follow at residues 1-29 (MNREPDSTVEQQHGSGHLENDAERDTLDF) and 44-67 (TGIPHRPCHLSQASMMGGGQMTGE). Basic and acidic residues predominate over residues 16–29 (GHLENDAERDTLDF). The region spanning 187 to 235 (QGDVGLAMGKLYGNDFSQTTISRFEALNLSFKNMCKLKPLLEKWLNDAE) is the POU-specific domain. The homeobox DNA-binding region spans 259–297 (KRKKRTSIETNIRLTLEKRFQDNPKPSSEEISMIAEQLV). The disordered stretch occupies residues 346-367 (MTVTSSCSPGNSSRPSSPTCGL). The segment covering 350 to 363 (SSCSPGNSSRPSSP) has biased composition (low complexity).

It belongs to the POU transcription factor family. Class-2 subfamily.

It is found in the nucleus. Functionally, transcription factor that binds to the octamer motif (5'-ATTTGCAT-3') and regulates cell type-specific differentiation pathways. This chain is POU domain, class 2, transcription factor 3L (pou2f3.L), found in Xenopus laevis (African clawed frog).